We begin with the raw amino-acid sequence, 332 residues long: 2,3-diketo-L-gulonate reductase (332 aa).

His44 serves as the catalytic Proton donor. NAD(+) contacts are provided by residues 168 to 174 (ITMVDMS), 224 to 225 (WK), and 304 to 306 (GHE).

This sequence belongs to the LDH2/MDH2 oxidoreductase family. DlgD subfamily. As to quaternary structure, homodimer.

It is found in the cytoplasm. The enzyme catalyses 3-dehydro-L-gulonate + NAD(+) = 2,3-dioxo-L-gulonate + NADH + H(+). It catalyses the reaction 3-dehydro-L-gulonate + NADP(+) = 2,3-dioxo-L-gulonate + NADPH + H(+). Catalyzes the reduction of 2,3-diketo-L-gulonate in the presence of NADH, to form 3-keto-L-gulonate. The sequence is that of 2,3-diketo-L-gulonate reductase from Escherichia coli O1:K1 / APEC.